We begin with the raw amino-acid sequence, 87 residues long: MNSLLMITACLALIGTVWAKEGYLVNHSTGCKYECFKLGDNDYCLRECRQQYGKGAGGYCYAFGCWCTHLYEQAVVWPLPKKTCNGK.

The first 19 residues, 1–19, serve as a signal peptide directing secretion; sequence MNSLLMITACLALIGTVWA. One can recognise an LCN-type CS-alpha/beta domain in the interval 20 to 85; that stretch reads KEGYLVNHST…VWPLPKKTCN (66 aa). Disulfide bonds link C31–C84, C35–C60, C44–C65, and C48–C67. N85 carries the asparagine amide modification.

The protein belongs to the long (4 C-C) scorpion toxin superfamily. Sodium channel inhibitor family. Beta subfamily. As to expression, expressed by the venom gland.

Its subcellular location is the secreted. Beta toxins bind voltage-independently at site-4 of sodium channels (Nav) and shift the voltage of activation toward more negative potentials thereby affecting sodium channel activation and promoting spontaneous and repetitive firing. Is lethal to mice but does not show toxicity to freshwater shrimp and crickets. In Centruroides tecomanus (Scorpion), this protein is Beta-toxin Ct1a.